Here is a 702-residue protein sequence, read N- to C-terminus: Protein crooked neck (702 aa).

HAT repeat units follow at residues 56-88 (DYQQ…WEEQ), 90-122 (QEIQ…MEMK), 124-156 (KQVN…MEEM), 158-189 (ENVA…FELR), 191-222 (KEID…FEES), 224-259 (GFIH…FEEG), 261-295 (KEHD…HEKK), 305-337 (VIVS…LIEA), 339-373 (GDRD…LWIN), 383-419 (EDAE…FEIR), 454-486 (REFE…LENL), 488-522 (GDTD…FEVA), and 524-555 (GETE…FEMG). Positions 620–628 (PRRIKKRQK) match the Nuclear localization signal motif. Residues 670 to 702 (KDNTVDDPPATAIASEPEPAADAAPADTTDSGD) form a disordered region. Over residues 683 to 702 (ASEPEPAADAAPADTTDSGD) the composition is skewed to low complexity.

The protein belongs to the crooked-neck family. As to quaternary structure, colocalizes with a complex containing snRNP proteins. In terms of tissue distribution, transcribed in all cells during embryonic development.

Its subcellular location is the nucleus speckle. Functionally, may be involved in pre-mRNA splicing process. Involved in embryonic neurogenesis and cell rearrangement during Malpighian tubule morphogenesis. This Drosophila melanogaster (Fruit fly) protein is Protein crooked neck (crn).